The following is a 458-amino-acid chain: MYGKIERIHFVGIGGIGMSGIAEVLLNLGYKVSGSDLRKSEITERLEQLGGEIHLGHTGSNVERADVVVISSAVHDDNPEVIEARERLIPVIPRAEMLAELMRMKYGIAIAGTHGKTTTTSMVATILATGGIDPTIVIGGRLNSIGTNARLGQGKFLVAEADESDGSFLKLSPTIAVVTNIDADHLDFYSGIEEIKDTFVEFINKIPFYGLAVLCLDNGNVADIIPLVKKRFTTYGLTAQADFRATEIRHEGFTTSFVAHYKGQKLGEISFNMPGAHNVLNALATIAVATELDMRFEDIQAGFKSFGGVGRRFQVKGEVNGIMVVDDYGHHPTEIKATLAAAKGGWDRRLVVVFQPHRYTRTKELFEEFVKAFYDADILILTDIYPAGEQPIEGVTAEALSARIKRHGQREVTFVADRNKVCDHLLSIVKEGDIVLTLGAGNILQAGEQLVEKLREAP.

112-118 contacts ATP; that stretch reads GTHGKTT.

The protein belongs to the MurCDEF family.

It is found in the cytoplasm. The catalysed reaction is UDP-N-acetyl-alpha-D-muramate + L-alanine + ATP = UDP-N-acetyl-alpha-D-muramoyl-L-alanine + ADP + phosphate + H(+). It participates in cell wall biogenesis; peptidoglycan biosynthesis. In terms of biological role, cell wall formation. This is UDP-N-acetylmuramate--L-alanine ligase from Geotalea daltonii (strain DSM 22248 / JCM 15807 / FRC-32) (Geobacter daltonii).